A 299-amino-acid polypeptide reads, in one-letter code: ATP phosphoribosyltransferase (299 aa).

The protein belongs to the ATP phosphoribosyltransferase family. Long subfamily. The cofactor is Mg(2+).

Its subcellular location is the cytoplasm. It carries out the reaction 1-(5-phospho-beta-D-ribosyl)-ATP + diphosphate = 5-phospho-alpha-D-ribose 1-diphosphate + ATP. It functions in the pathway amino-acid biosynthesis; L-histidine biosynthesis; L-histidine from 5-phospho-alpha-D-ribose 1-diphosphate: step 1/9. Its activity is regulated as follows. Feedback inhibited by histidine. In terms of biological role, catalyzes the condensation of ATP and 5-phosphoribose 1-diphosphate to form N'-(5'-phosphoribosyl)-ATP (PR-ATP). Has a crucial role in the pathway because the rate of histidine biosynthesis seems to be controlled primarily by regulation of HisG enzymatic activity. This is ATP phosphoribosyltransferase from Campylobacter jejuni subsp. jejuni serotype O:2 (strain ATCC 700819 / NCTC 11168).